The chain runs to 264 residues: Stress response regulator protein 1 (264 aa).

Residues 50–74 (IYSDCDNNKNNNDDDDDDDDYNKDT) form a disordered region. The segment covering 62–74 (DDDDDDDDYNKDT) has biased composition (acidic residues). The Response regulatory domain maps to 138–256 (RFLIVDDNII…LDLIGGSIDD (119 aa)). 4-aspartylphosphate is present on Asp-189.

Its function is as follows. Required for stress adaptation, morphogenesis and virulence. This Candida tropicalis (strain ATCC MYA-3404 / T1) (Yeast) protein is Stress response regulator protein 1 (SRR1).